Consider the following 307-residue polypeptide: MSSLGRILSVSYPPDPYTWRFSQYKLSSSLGRNRRLRWRFTALDPESSSLDSESSADKFASGFCIIEGPETVQDFAKMQLQEIQDNIRSRRNKIFLHMEEVRRLRIQQRIKNTELGIINEEQEHELPNFPSFIPFLPPLTAANLKVYYATCFSLIAGIILFGGLLAPTLELKLGIGGTSYADFIQSLHLPMQLSQVDPIVASFSGGAVGVISALMVVEVNNVKQQEHKRCKYCLGTGYLACARCSSTGALVLTEPVSAIAGGNHSLSPPKTERCSNCSGAGKVMCPTCLCTGMAMASEHDPRIDPFD.

A chloroplast-targeting transit peptide spans 1 to 55 (MSSLGRILSVSYPPDPYTWRFSQYKLSSSLGRNRRLRWRFTALDPESSSLDSESS). Residue Lys-58 forms a Glycyl lysine isopeptide (Lys-Gly) (interchain with G-Cter in ubiquitin) linkage. The next 2 membrane-spanning stretches (helical) occupy residues 146–166 (VYYA…GLLA) and 199–219 (IVAS…VVEV). Positions 208 to 299 (VGVISALMVV…CTGMAMASEH (92 aa)) are CR-type-like. Residues 230-237 (CKYCLGTG) form a CXXCXGXG motif repeat. The CXXCXXXG motif repeat unit spans residues 241–248 (CARCSSTG). Residues 274–281 (CSNCSGAG) form a CXXCXGXG motif repeat. Residues 285-292 (CPTCLCTG) form a CXXCXXXG motif repeat.

It belongs to the orange-like family. Interacts with the phytoene synthase PSY1 in chloroplast. Binds to the eukaryotic release factor eRF1-2. Interacts with the transcription factor TCP14 in the nucleus to repress chloroplast biogenesis in etiolated seedlings. Associates to the E2 ubiquitin-conjugating enzyme UBC19. Ubiquitination at K-58 by UBC19 is essential for nuclear localization.

Its subcellular location is the plastid. The protein resides in the chloroplast membrane. It localises to the nucleus. The protein localises to the cytoplasm. In terms of biological role, involved in chromoplast differentiation. Associated with a cellular process that triggers the differentiation of pro-plastids or other non-colored plastids into chromoplasts for carotenoid accumulation. Is associated with carotenoid accumulation in chromoplasts. Functions as a major regulator of the phytoene synthase PSY1 protein level and activity. Modulates carotenoid biosynthesis by means of post-transcriptional regulation of PSY1. Modulates carotenoid biosynthesis in part by up-regulating a series of endogenous carotenogenic genes. Regulates cell elongation in the petiole in an eRF1-2-dependent manner. Binds to and represses TCP14 transactivation activity, thus preventing early light-induced proteins (ELIPs, e.g. ELIP1 and ELIP2) expression and delaying chloroplast biogenesis (e.g. lower chlorophyll biosynthesis and slower development of thylakoid membranes) in germinating cotyledons and etiolated seedlings; reduced levels upon illumination combined to TCP14 accumulation derepress chloroplast biogenesis during deetiolation. In Arabidopsis thaliana (Mouse-ear cress), this protein is Protein ORANGE, chloroplastic.